Reading from the N-terminus, the 530-residue chain is TNF receptor-associated factor family protein DDB_G0272829 (530 aa).

The RING-type; degenerate zinc finger occupies 35–81 (CQICEGLLISSLIPNRMKALQCINGHCFCLTCWESILEIKSECPTCR). 2 consecutive TRAF-type zinc fingers follow at residues 134–188 (RHES…KQMQ) and 189–246 (GHIL…NDND). 3 disordered regions span residues 242–267 (NNDN…LSSS), 391–432 (TTTT…DNQG), and 483–530 (FNQL…GTSL). Low complexity-rich tracts occupy residues 253 to 267 (NNSN…LSSS), 391 to 415 (TTTT…NNNN), and 485 to 502 (QLSQ…SQSL). A coiled-coil region spans residues 361–422 (ILEHQQQQNQ…NNNNEDEEDD (62 aa)). Residues 509–530 (ITINQNQNTPSNPFSIFSGTSL) are compositionally biased toward polar residues.

Belongs to the TNF receptor-associated factor family.

The protein localises to the cytoplasm. Probable adapter protein and signal transducer that links members of the tumor necrosis factor receptor family to different signaling pathways by association with the receptor cytoplasmic domain and kinases. The protein is TNF receptor-associated factor family protein DDB_G0272829 of Dictyostelium discoideum (Social amoeba).